Here is a 169-residue protein sequence, read N- to C-terminus: Peptide methionine sulfoxide reductase MsrA (169 aa).

C10 is an active-site residue.

Belongs to the MsrA Met sulfoxide reductase family.

It carries out the reaction L-methionyl-[protein] + [thioredoxin]-disulfide + H2O = L-methionyl-(S)-S-oxide-[protein] + [thioredoxin]-dithiol. The catalysed reaction is [thioredoxin]-disulfide + L-methionine + H2O = L-methionine (S)-S-oxide + [thioredoxin]-dithiol. Has an important function as a repair enzyme for proteins that have been inactivated by oxidation. Catalyzes the reversible oxidation-reduction of methionine sulfoxide in proteins to methionine. In Streptococcus mutans serotype c (strain ATCC 700610 / UA159), this protein is Peptide methionine sulfoxide reductase MsrA.